Here is a 284-residue protein sequence, read N- to C-terminus: Tropomyosin alpha-1 chain (284 aa).

Met1 bears the N-acetylmethionine mark. The disordered stretch occupies residues 1 to 40; it reads MDAIKKKMQMLKLDKENALDRAEQAESDKKASEDRSKQLE. A coiled-coil region spans residues 1-284; the sequence is MDAIKKKMQM…DHALNDMTSI (284 aa). Residues 12–40 show a composition bias toward basic and acidic residues; that stretch reads KLDKENALDRAEQAESDKKASEDRSKQLE.

In terms of assembly, homodimer. Heterodimer of an alpha (TPM1, TPM3 or TPM4) and a beta (TPM2) chain.

It is found in the cytoplasm. The protein resides in the cytoskeleton. Functionally, binds to actin filaments in muscle and non-muscle cells. Plays a central role, in association with the troponin complex, in the calcium dependent regulation of vertebrate striated muscle contraction. Smooth muscle contraction is regulated by interaction with caldesmon. In non-muscle cells is implicated in stabilizing cytoskeleton actin filaments. This is Tropomyosin alpha-1 chain from Chelon auratus (Golden grey mullet).